Consider the following 417-residue polypeptide: Cobalamin binding intrinsic factor (417 aa).

The signal sequence occupies residues 1–22 (MAWFSLHLLHLLWAAAGTSTWA). Cystine bridges form between C26–C246, C103–C288, and C143–C182. An N-linked (GlcNAc...) asparagine glycan is attached at N100. A cob(II)alamin-binding site is contributed by D171. S191 carries the post-translational modification Phosphoserine. The N-linked (GlcNAc...) asparagine glycan is linked to N209. Cob(II)alamin is bound by residues D222 and Q270. N-linked (GlcNAc...) asparagine glycans are attached at residues N311 and N330. Residues 365–370 (SWGLVV) and 386–395 (WQFLSGKTPL) contribute to the cob(II)alamin site. N413 is a glycosylation site (N-linked (GlcNAc...) asparagine).

Belongs to the eukaryotic cobalamin transport proteins family. Interacts with CUBN (via CUB domains).

It localises to the secreted. In terms of biological role, promotes absorption of the essential vitamin cobalamin (Cbl) in the ileum. After interaction with CUBN, the CBLIF-cobalamin complex is internalized via receptor-mediated endocytosis. The polypeptide is Cobalamin binding intrinsic factor (CBLIF) (Canis lupus familiaris (Dog)).